We begin with the raw amino-acid sequence, 317 residues long: Ribosomal RNA small subunit methyltransferase H (317 aa).

S-adenosyl-L-methionine contacts are provided by residues alanine 37–histidine 39, aspartate 56, phenylalanine 85, aspartate 106, and glutamine 113.

Belongs to the methyltransferase superfamily. RsmH family.

The protein localises to the cytoplasm. It catalyses the reaction cytidine(1402) in 16S rRNA + S-adenosyl-L-methionine = N(4)-methylcytidine(1402) in 16S rRNA + S-adenosyl-L-homocysteine + H(+). Functionally, specifically methylates the N4 position of cytidine in position 1402 (C1402) of 16S rRNA. This chain is Ribosomal RNA small subunit methyltransferase H, found in Lactococcus lactis subsp. cremoris (strain SK11).